The primary structure comprises 694 residues: Protein NPGR1 (694 aa).

A disordered region spans residues 12–40 (FEDQPGSPESLATRDFSASGLSSRNGGGD). TPR repeat units lie at residues 32-65 (LSSR…SLNY), 66-101 (EEAR…TPRI), 135-168 (LEAI…VENA), 188-221 (QKAL…PWNL), 307-340 (GERW…SESR), 551-584 (TEAW…CYYS), 585-618 (PRGW…EPDH), 620-654 (PSIV…DPRN), and 655-688 (HDAW…ELSA).

Interacts with calmodulin in a calcium-dependent manner. As to expression, expressed in pollen, flowers, fruits and leaves.

The sequence is that of Protein NPGR1 from Arabidopsis thaliana (Mouse-ear cress).